The following is a 258-amino-acid chain: Tritrans,polycis-undecaprenyl-diphosphate synthase (geranylgeranyl-diphosphate specific) (258 aa).

The active site involves aspartate 37. Aspartate 37 lines the Mg(2+) pocket. Substrate is bound by residues 38-41 (GNRR), histidine 54, and 82-84 (STE). Residue asparagine 85 is the Proton acceptor of the active site. Substrate is bound by residues phenylalanine 86, arginine 88, arginine 207, and 213–215 (RIS). Residue glutamate 226 participates in Mg(2+) binding.

It belongs to the UPP synthase family. In terms of assembly, homodimer. Requires Mg(2+) as cofactor.

The catalysed reaction is geranylgeranyl diphosphate + 7 isopentenyl diphosphate = tri-trans,hepta-cis-undecaprenyl diphosphate + 7 diphosphate. In terms of biological role, catalyzes the sequential condensation of isopentenyl diphosphate (IPP) with geranylgeranyl diphosphate (GGPP) to yield (2Z,6Z,10Z,14Z,18Z,22Z,26Z,30E,34E,38E)-undecaprenyl diphosphate (tritrans,heptacis-UPP). It is probably the precursor of glycosyl carrier lipids. The polypeptide is Tritrans,polycis-undecaprenyl-diphosphate synthase (geranylgeranyl-diphosphate specific) (Thermoplasma volcanium (strain ATCC 51530 / DSM 4299 / JCM 9571 / NBRC 15438 / GSS1)).